The primary structure comprises 725 residues: Catalase-peroxidase (725 aa).

Positions 90-213 form a cross-link, tryptophyl-tyrosyl-methioninium (Trp-Tyr) (with M-239); sequence WHSAGTYRTG…LAAVQMGLIY (124 aa). His91 acts as the Proton acceptor in catalysis. The tryptophyl-tyrosyl-methioninium (Tyr-Met) (with W-90) cross-link spans 213–239; the sequence is YVNPEGPNGNPDPVAAAKDIRETFARM. His254 lines the heme b pocket.

The protein belongs to the peroxidase family. Peroxidase/catalase subfamily. In terms of assembly, homodimer or homotetramer. The cofactor is heme b. Formation of the three residue Trp-Tyr-Met cross-link is important for the catalase, but not the peroxidase activity of the enzyme.

The enzyme catalyses H2O2 + AH2 = A + 2 H2O. It carries out the reaction 2 H2O2 = O2 + 2 H2O. Bifunctional enzyme with both catalase and broad-spectrum peroxidase activity. This is Catalase-peroxidase from Hahella chejuensis (strain KCTC 2396).